A 428-amino-acid chain; its full sequence is Tyrosine--tRNA ligase (428 aa).

Residue Tyr-41 participates in L-tyrosine binding. The 'HIGH' region motif lies at Pro-46 to His-55. 2 residues coordinate L-tyrosine: Tyr-179 and Gln-183. The 'KMSKS' region signature appears at Lys-239–Thr-243. Lys-242 provides a ligand contact to ATP. The S4 RNA-binding domain maps to Ala-361–Gly-418.

Belongs to the class-I aminoacyl-tRNA synthetase family. TyrS type 1 subfamily. In terms of assembly, homodimer.

The protein localises to the cytoplasm. The enzyme catalyses tRNA(Tyr) + L-tyrosine + ATP = L-tyrosyl-tRNA(Tyr) + AMP + diphosphate + H(+). Functionally, catalyzes the attachment of tyrosine to tRNA(Tyr) in a two-step reaction: tyrosine is first activated by ATP to form Tyr-AMP and then transferred to the acceptor end of tRNA(Tyr). The protein is Tyrosine--tRNA ligase of Klebsiella pneumoniae subsp. pneumoniae (strain ATCC 700721 / MGH 78578).